Consider the following 874-residue polypeptide: Alanine--tRNA ligase (874 aa).

4 residues coordinate Zn(2+): H564, H568, C665, and H669.

Belongs to the class-II aminoacyl-tRNA synthetase family. Requires Zn(2+) as cofactor.

It localises to the cytoplasm. It catalyses the reaction tRNA(Ala) + L-alanine + ATP = L-alanyl-tRNA(Ala) + AMP + diphosphate. Functionally, catalyzes the attachment of alanine to tRNA(Ala) in a two-step reaction: alanine is first activated by ATP to form Ala-AMP and then transferred to the acceptor end of tRNA(Ala). Also edits incorrectly charged Ser-tRNA(Ala) and Gly-tRNA(Ala) via its editing domain. The polypeptide is Alanine--tRNA ligase (Burkholderia pseudomallei (strain 668)).